We begin with the raw amino-acid sequence, 358 residues long: Homoserine O-succinyltransferase (358 aa).

C146 (acyl-thioester intermediate) is an active-site residue. Substrate contacts are provided by K167 and S196. The active-site Proton acceptor is H239. E241 is an active-site residue. R253 lines the substrate pocket.

It belongs to the MetA family.

The protein resides in the cytoplasm. The catalysed reaction is L-homoserine + succinyl-CoA = O-succinyl-L-homoserine + CoA. Its pathway is amino-acid biosynthesis; L-methionine biosynthesis via de novo pathway; O-succinyl-L-homoserine from L-homoserine: step 1/1. In terms of biological role, transfers a succinyl group from succinyl-CoA to L-homoserine, forming succinyl-L-homoserine. The polypeptide is Homoserine O-succinyltransferase (Nitrosococcus oceani (strain ATCC 19707 / BCRC 17464 / JCM 30415 / NCIMB 11848 / C-107)).